The chain runs to 933 residues: Protein inturned (933 aa).

Residues 1 to 54 (MASLPLCGSVRSPEGLPGDPSSQEDRQDYDPEDPVSGSGSYSPTSTDSNDLEPE) are disordered. Polar residues predominate over residues 37 to 48 (GSGSYSPTSTDS). Residues 186–264 (LVGIIHQTKW…PMQVKLTFEN (79 aa)) form the PDZ domain. Position 675 is a phosphoserine (serine 675). The segment at 703–742 (LKTRKPSPSRSGGPDSGLEGEGVGLSPHTTESQGSHGSEE) is disordered. Low complexity predominate over residues 710 to 719 (PSRSGGPDSG). Over residues 729-738 (PHTTESQGSH) the composition is skewed to polar residues.

It belongs to the inturned family. Component of the CPLANE (ciliogenesis and planar polarity effectors) complex, composed of INTU, FUZ and WDPCP. Interacts with CPLANE1. Interacts with NPHP4 and DAAM1; INTU is mediating the interaction between NPHP4 and DAAM1.

The protein localises to the cytoplasm. It is found in the cell surface. It localises to the cytoskeleton. The protein resides in the cilium basal body. Its subcellular location is the microtubule organizing center. The protein localises to the centrosome. It is found in the centriole. Its function is as follows. Plays a key role in ciliogenesis and embryonic development. Regulator of cilia formation by controlling the organization of the apical actin cytoskeleton and the positioning of the basal bodies at the apical cell surface, which in turn is essential for the normal orientation of elongating ciliary microtubules. Plays a key role in definition of cell polarity via its role in ciliogenesis but not via conversion extension. Has an indirect effect on hedgehog signaling. Proposed to function as core component of the CPLANE (ciliogenesis and planar polarity effectors) complex involved in the recruitment of peripheral IFT-A proteins to basal bodies. Required for recruitment of CPLANE2 to the mother centriole. Binds phosphatidylinositol 3-phosphate with highest affinity, followed by phosphatidylinositol 4-phosphate and phosphatidylinositol 5-phosphate. This Bos taurus (Bovine) protein is Protein inturned (INTU).